The chain runs to 213 residues: Putative amidate substrates transporter protein (213 aa).

6 helical membrane passes run 4–20 (VGLF…GLML), 32–48 (LNFF…TVLI), 56–72 (AVIF…FTYL), 116–132 (VIWL…FLLL), 146–162 (VAVA…AFLI), and 172–188 (LPAA…VVLA).

Belongs to the AmiS/UreI family.

It localises to the cell membrane. Functionally, possible transporter that might be responsible for the adsorption of amidase substrates or release of their hydrolysis products. This is Putative amidate substrates transporter protein from Mycolicibacterium smegmatis (Mycobacterium smegmatis).